The primary structure comprises 193 residues: MMRHINEILIAKEKYFQSSINDHDLKEIILKIQQDCITYHSTDLLGSSLLHKLILILIIEKFKSLLLFEKNIISIFDLECVNFQEEMNSIMYVMNEVEKQYLRSDKFSTHNHSLTGGLFASNSVIRRINFPKEISKILRKWLKKHLTYPYPSKIEKKMLSKETGLKLSQIDNWFANARRRILPFMKEKFIDFD.

The homeobox; TALE-type DNA-binding region spans 123–185 (SVIRRINFPK…NARRRILPFM (63 aa)).

This sequence belongs to the TALE/KNOX homeobox family.

It is found in the nucleus. In Encephalitozoon cuniculi (strain GB-M1) (Microsporidian parasite), this protein is Homeobox protein HD-12 (HD-12).